A 326-amino-acid polypeptide reads, in one-letter code: Ribonuclease H2 subunit A (326 aa).

The tract at residues 1–47 (MKDDHDAWEPEELVSDNNSSENELQEDQNSSITFLPPSVNKSNPAKS) is disordered. Residues 15–47 (SDNNSSENELQEDQNSSITFLPPSVNKSNPAKS) show a composition bias toward polar residues. One can recognise an RNase H type-2 domain in the interval 63–286 (PYRLGVDEAG…AKDLLELPSK (224 aa)). A divalent metal cation is bound by residues Asp69, Glu70, and Asp180.

The protein belongs to the RNase HII family. Eukaryotic subfamily. Mn(2+) is required as a cofactor. It depends on Mg(2+) as a cofactor.

The catalysed reaction is Endonucleolytic cleavage to 5'-phosphomonoester.. In terms of biological role, endonuclease that specifically degrades the RNA of RNA-DNA hybrids. Participates in DNA replication. This Schizosaccharomyces pombe (strain 972 / ATCC 24843) (Fission yeast) protein is Ribonuclease H2 subunit A (rnh201).